Here is a 351-residue protein sequence, read N- to C-terminus: Anaerobic nitrite reductase Glb1-2 (351 aa).

2 Globin domains span residues D13–K162 and C184–K333. Residues S56, K70, H74, K104, T108, H109, S227, K241, H245, K275, T279, and H280 each coordinate heme b. Positions E331 to S351 are disordered.

This sequence belongs to the plant globin family. Monomer. Heme b is required as a cofactor. Predominantly expressed in nodules and roots, and, to a lesser extent, in leaves, at low levels in pods, but barely in stems, petioles, buds and flowers. As to expression, mainly expressed in nodules and roots at low levels, and barely in leaves. In terms of tissue distribution, expressed at very low levels in nodules, roots and pods.

It localises to the cytoplasm. The protein resides in the nucleus. The catalysed reaction is Fe(III)-heme b-[protein] + nitric oxide + H2O = Fe(II)-heme b-[protein] + nitrite + 2 H(+). Phytoglobin that regulates the fine tuning of nitric oxide (NO) concentration in the cytosol in response to sudden changes in O(2) availability, and performs both symbiotic and nonsymbiotic functions. Exhibits NO dioxygenase activity in the presence of O(2) but nitrite reductase (NiR) activity in the absence of O(2) (e.g. during flooding or in waterlogged soil). May not function as an oxygen storage or transport protein. Extremely reactive toward the physiological ligands O(2), nitric oxide (NO), and nitrite with a very high affinity for O(2) through an hexacoordinate heme iron because of a very low dissociation constant. Functionally, very high affinity for O(2) through two hexacoordinate heme irons. Extremely reactive toward the physiological ligands O(2), nitric oxide (NO), and nitrite. Its function is as follows. Very high affinity for O(2) through a single hexacoordinate heme iron. Extremely reactive toward the physiological ligands O(2), nitric oxide (NO), and nitrite. This is Anaerobic nitrite reductase Glb1-2 from Medicago truncatula (Barrel medic).